The following is a 2472-amino-acid chain: Centrosomal protein of 290 kDa (2472 aa).

The segment at 1–689 is self-association (with itself or C-terminus); the sequence is MPPNIKWKEL…MESKNAEGIF (689 aa). 3 coiled-coil regions span residues 59-747, 1129-1392, and 1459-1492; these read MKMK…LRQS, RQRI…QQSK, and QVIL…ILSR. Residues 128-164 form a disordered region; that stretch reads DRELEDMEKELDKEKKVNEQLALRNEEAENENSKLRR. Residues 137-164 show a composition bias toward basic and acidic residues; the sequence is ELDKEKKVNEQLALRNEEAENENSKLRR. Residues 690–890 are interaction with IQCB1; sequence DASLHLKAQV…TVLQVNEKSL (201 aa). Disordered regions lie at residues 1691-1713 and 2451-2472; these read AHKD…SRAP and PSPL…FPIY. Polar residues predominate over residues 1697–1713; that stretch reads SLKSELQAQKEANSRAP. The tract at residues 1960-2472 is self-association (with itself or N-terminus); the sequence is TTGMTVDQVL…GESPHSFPIY (513 aa).

In terms of assembly, part of the tectonic-like complex (also named B9 complex). Interacts with ATF4 via its N-terminal region. Associates with the BBSome complex, interacting (via N-terminus) with BBS4. Interacts with IQCB1/NPHP5; IQCB1 and CEP290/NPHP6 are proposed to form a functional NPHP5-6 module localized to the centrosome. Interacts with NPHP4; the interaction likely requires additional interactors. Interacts with ZNF423, FAM161A, CEP162, CEP162, CEP131, TALPID3, CCDC13, CC2D2A, RPGRIP1. Can self-associate (homo- or heteromeric). Interacts with CCP110; required for suppressing cilia formation. Interacts with RPGR. Associates (via C-terminus) with microtubules; association to microtubule is reduced in response to cellular stress, such as ultraviolet light (UV) radiation or heat shock, in a process that requires p38 MAP kinase signaling. Interacts with FAM161A. Interacts with PCM1. Interacts with CCDC66. Interacts with ARMC9 and CSPP1. Post-translationally, ubiquitinated. May undergo monoubiquitination; monoubiquitination is inhibited in response to cellular stress, such as ultraviolet light (UV) radiation or heat shock, but does not cause its displacement from centriolar satellites. As to expression, expressed in multiple organs during early postnatal development, with highest levels in hindbrain.

It is found in the cytoplasm. Its subcellular location is the cytoskeleton. The protein localises to the microtubule organizing center. It localises to the centrosome. The protein resides in the centriolar satellite. It is found in the nucleus. Its subcellular location is the centriole. The protein localises to the cell projection. It localises to the cilium. The protein resides in the cilium basal body. It is found in the cytoplasmic vesicle. In terms of biological role, involved in early and late steps in cilia formation. Its association with CCP110 is required for inhibition of primary cilia formation by CCP110. May play a role in early ciliogenesis in the disappearance of centriolar satellites and in the transition of primary ciliar vesicles (PCVs) to capped ciliary vesicles (CCVs). Required for the centrosomal recruitment of RAB8A and for the targeting of centriole satellite proteins to centrosomes such as of PCM1. Required for the correct localization of ciliary and phototransduction proteins in retinal photoreceptor cells; may play a role in ciliary transport processes. Required for efficient recruitment of RAB8A to primary cilium. In the ciliary transition zone is part of the tectonic-like complex (also named B9 complex) which is required for tissue-specific ciliogenesis and may regulate ciliary membrane composition. Involved in regulation of the BBSome complex integrity, specifically for presence of BBS2, BBS5 and BBS8/TTC8 in the complex, and in ciliary targeting of selected BBSome cargos. May play a role in controlling entry of the BBSome complex to cilia possibly implicating IQCB1/NPHP5. Activates ATF4-mediated transcription. This is Centrosomal protein of 290 kDa from Mus musculus (Mouse).